The chain runs to 110 residues: Quaternary ammonium compound-resistance protein QacE (110 aa).

Helical transmembrane passes span 1–21 (MKGWLFLVIAIVGEVIATSAL), 30–50 (LAPSAVVIIGYGIAFYFLSLV), 58–78 (VAYAVWSGLGVVIITAIAWLL), and 85–105 (AWGFVGMGLIVSGVVVLNLLS).

It belongs to the drug/metabolite transporter (DMT) superfamily. Small multidrug resistance (SMR) (TC 2.A.7.1) family.

It is found in the cell membrane. Multidrug exporter. Is implicated for the resistance to bacteriocidal quaternary ammonium compounds. This chain is Quaternary ammonium compound-resistance protein QacE (qacE), found in Escherichia coli.